The sequence spans 424 residues: 26S proteasome regulatory subunit 4 homolog (424 aa).

Residues 1–11 are compositionally biased toward basic and acidic residues; it reads MSRDKSERDNL. A disordered region spans residues 1-33; sequence MSRDKSERDNLQDTTTINLRRRRRVKEGKAASK. 210–217 contributes to the ATP binding site; that stretch reads GLPGTGKT.

Belongs to the AAA ATPase family. In terms of assembly, the 26S proteasome consists of a 20S proteasome core and two 19S regulatory subunits. The 20S proteasome core is composed of 28 subunits that are arranged in four stacked rings, resulting in a barrel-shaped structure. The two end rings are each formed by seven alpha subunits, and the two central rings are each formed by seven beta subunits. The catalytic chamber with the active sites is on the inside of the barrel.

The protein resides in the cytoplasm. It is found in the nucleus. Acts as a regulatory subunit of the 26S proteasome which degrades poly-ubiquitinated proteins in the cytoplasm and in the nucleus. It is essential for the regulated turnover of proteins and for the removal of misfolded proteins. The proteasome is a multicatalytic proteinase complex that is characterized by its ability to cleave peptides with Arg, Phe, Tyr, Leu, and Glu adjacent to the leaving group at neutral or slightly basic pH. The sequence is that of 26S proteasome regulatory subunit 4 homolog (RPT2) from Encephalitozoon cuniculi (strain GB-M1) (Microsporidian parasite).